Reading from the N-terminus, the 51-residue chain is MARYRCCRSQSRSRCCRRRRRCRRRRRQRCRARRTAMRCCRRRYRRRCRRY.

This sequence belongs to the protamine P1 family. Testis.

It is found in the nucleus. Its subcellular location is the chromosome. Protamines substitute for histones in the chromatin of sperm during the haploid phase of spermatogenesis. They compact sperm DNA into a highly condensed, stable and inactive complex. This is Sperm protamine P1 (PRM1) from Piliocolobus badius (Western red colobus).